Here is a 146-residue protein sequence, read N- to C-terminus: Ferredoxin-thioredoxin reductase catalytic chain, chloroplastic (146 aa).

Residues 1 to 26 (MMSMASTTASPFCPSPMPRGRKCTVR) constitute a chloroplast transit peptide. Cys-85 provides a ligand contact to [4Fe-4S] cluster. Cys-87 serves as the catalytic Nucleophile. Cys-87 and Cys-117 form a disulfide bridge. Residues Cys-104, Cys-106, and Cys-115 each contribute to the [4Fe-4S] cluster site.

Belongs to the ferredoxin thioredoxin reductase beta subunit family. As to quaternary structure, heterodimer of subunit A (variable subunit) and subunit B (catalytic subunit). Heterodimeric FTR forms a complex with ferredoxin and thioredoxin. [4Fe-4S] cluster is required as a cofactor.

Its subcellular location is the plastid. The protein resides in the chloroplast. The catalysed reaction is [thioredoxin]-disulfide + 2 reduced [2Fe-2S]-[ferredoxin] + 2 H(+) = [thioredoxin]-dithiol + 2 oxidized [2Fe-2S]-[ferredoxin]. Its function is as follows. Catalytic subunit of the ferredoxin-thioredoxin reductase (FTR), which catalyzes the two-electron reduction of thioredoxins by the electrons provided by reduced ferredoxin. In Oryza sativa subsp. japonica (Rice), this protein is Ferredoxin-thioredoxin reductase catalytic chain, chloroplastic.